Reading from the N-terminus, the 385-residue chain is Probable caffeine synthase 4 (385 aa).

The S-adenosyl-L-homocysteine site is built by Tyr18, Cys62, Asn67, Asp101, Leu102, Ser140, and Phe141. Residues Tyr158, Gln161, and Phe162 each contribute to the caffeine site. Position 179 (Asn179) interacts with Mg(2+). Thr238 is a binding site for caffeine. Mg(2+) contacts are provided by Asp261, Phe263, and Asn264. Tyr369 serves as a coordination point for caffeine.

Belongs to the methyltransferase superfamily. Type-7 methyltransferase family. Mg(2+) serves as cofactor. In terms of tissue distribution, expressed in roots, stems, young and old leaves.

It functions in the pathway alkaloid biosynthesis. In terms of biological role, may be involved in the biosynthesis of caffeine. The protein is Probable caffeine synthase 4 of Coffea arabica (Arabian coffee).